The primary structure comprises 361 residues: Mitogen-activated protein kinase 14 (361 aa).

In terms of domain architecture, Protein kinase spans 25-309 (YQNLTPVGSG…AAEALAHSYF (285 aa)). Residues 31 to 39 (VGSGAYGSV) and Lys54 each bind ATP. Catalysis depends on Asp151, which acts as the Proton acceptor. Thr181 carries the phosphothreonine modification. The TXY motif lies at 181–183 (TGY). At Tyr183 the chain carries Phosphotyrosine.

Belongs to the protein kinase superfamily. CMGC Ser/Thr protein kinase family. MAP kinase subfamily. The cofactor is Mg(2+). In terms of processing, dually phosphorylated on Thr-181 and Tyr-183, which activates the enzyme.

It catalyses the reaction L-seryl-[protein] + ATP = O-phospho-L-seryl-[protein] + ADP + H(+). The catalysed reaction is L-threonyl-[protein] + ATP = O-phospho-L-threonyl-[protein] + ADP + H(+). Activated by tyrosine and threonine phosphorylation. In terms of biological role, serine/threonine kinase which acts as an essential component of the MAP kinase signal transduction pathway. mapk14a is one of the four p38 MAPKs which play an important role in the cascades of cellular responses evoked by extracellular stimuli such as pro-inflammatory cytokines or physical stress leading to direct activation of transcription factors. Accordingly, p38 MAPKs phosphorylate a broad range of proteins and it has been estimated that they may have approximately 200 to 300 substrates each. Some of the targets are downstream kinases which are activated through phosphorylation and further phosphorylate additional targets. MPK2 is activated by upstream MAPKK/MAPKKK and stimulates MAPKAP kinase 2 to phosphorylate small heat shock proteins. Does not phosphorylate myelin basic protein or MAPKAP kinase 1. This chain is Mitogen-activated protein kinase 14 (mapk14), found in Xenopus laevis (African clawed frog).